The sequence spans 183 residues: Orotate phosphoribosyltransferase (183 aa).

Residues Arg100, Lys101, Lys104, His106, and 126–134 (EDVVTTGSS) contribute to the 5-phospho-alpha-D-ribose 1-diphosphate site. Thr130 and Arg158 together coordinate orotate.

The protein belongs to the purine/pyrimidine phosphoribosyltransferase family. PyrE subfamily. Homodimer. Requires Mg(2+) as cofactor.

The enzyme catalyses orotidine 5'-phosphate + diphosphate = orotate + 5-phospho-alpha-D-ribose 1-diphosphate. It functions in the pathway pyrimidine metabolism; UMP biosynthesis via de novo pathway; UMP from orotate: step 1/2. Its function is as follows. Catalyzes the transfer of a ribosyl phosphate group from 5-phosphoribose 1-diphosphate to orotate, leading to the formation of orotidine monophosphate (OMP). This Aquifex aeolicus (strain VF5) protein is Orotate phosphoribosyltransferase.